The following is a 633-amino-acid chain: MTPSNEPGKQDQIPQPGPTIPNQYSFLWLSAAIFLMFLWLQGNNQQQQQELAYSEFKQAVISGQVAEVTLRTEEISGSFTDSGASRFANDSRPPSSSFITLRPQVEDPELLPLLERQEVLVRGSRSGRPWWQELILGFLPWILLLALMFWFWGAAQKRMTQGGGPFDYGKSRARRARRETSTTTLDDVAGIESAKRDISEIIDFLKSPDKYRRLGAVMPKGVLLVGPPGTGKTLLARAIAGEAEVPFFSISASEFIEMFVGVGAARVRDMFQTARKEAPALIFIDELDAVGRSRGAGLGGGHDEREQTLNQILTEMDGFEAHENVLVLAATNRPDVLDTALLRPGRFDRKITLDRPHREAREAILKVHVRKVPLAADVDLTQVAARTTGFSGADLKNLVNEAALTAARDNLVEVNNHCFEVAHDRLILGEERDAQLTPEEREAVAYHECGHAIMAYYMPKADPLTKITIIPHGMAMGVTEQTPKEDKYNYTESYLEDRIKVMLGGRSAEKIIYGEVSTGAQNDLKEATKLLRRMVGQWGMSEKIGPLGLGIGEEHVFLGREMGAPREYSEKLAEMIDSEIQSQLLAFEAFTVSFLTEHRQELDALARAVMKRETLSAGEITEVLEEARSRETA.

Topologically, residues 1–19 are cytoplasmic; sequence MTPSNEPGKQDQIPQPGPT. A helical transmembrane segment spans residues 20–40; that stretch reads IPNQYSFLWLSAAIFLMFLWL. Over 41–133 the chain is Periplasmic; that stretch reads QGNNQQQQQE…SRSGRPWWQE (93 aa). The chain crosses the membrane as a helical span at residues 134–154; that stretch reads LILGFLPWILLLALMFWFWGA. Residues 155 to 633 are Cytoplasmic-facing; that stretch reads AQKRMTQGGG…LEEARSRETA (479 aa). Residue 226-233 coordinates ATP; the sequence is GPPGTGKT. A Zn(2+)-binding site is contributed by histidine 447. Glutamate 448 is a catalytic residue. Zn(2+) contacts are provided by histidine 451 and aspartate 523.

In the central section; belongs to the AAA ATPase family. It in the C-terminal section; belongs to the peptidase M41 family. In terms of assembly, homohexamer. Zn(2+) serves as cofactor.

The protein localises to the cell inner membrane. Functionally, acts as a processive, ATP-dependent zinc metallopeptidase for both cytoplasmic and membrane proteins. Plays a role in the quality control of integral membrane proteins. This is ATP-dependent zinc metalloprotease FtsH from Marinobacter nauticus (strain ATCC 700491 / DSM 11845 / VT8) (Marinobacter aquaeolei).